Here is a 79-residue protein sequence, read N- to C-terminus: uncharacterized protein (79 aa).

An N-terminal signal peptide occupies residues 1–24 (MKMNPCTVILCKSLFFFCLFQVDC). Residue Asn33 is glycosylated (N-linked (GlcNAc...) asparagine).

It is found in the secreted. This is an uncharacterized protein from Saccharomyces cerevisiae (strain ATCC 204508 / S288c) (Baker's yeast).